A 74-amino-acid chain; its full sequence is Tetrahydromethanopterin S-methyltransferase subunit G (74 aa).

A helical transmembrane segment spans residues 50–70 (IGILYGLVIGLYLCMLYILLG).

This sequence belongs to the MtrG family. In terms of assembly, the complex is composed of 8 subunits; MtrA, MtrB, MtrC, MtrD, MtrE, MtrF, MtrG and MtrH.

The protein resides in the cell membrane. The enzyme catalyses 5-methyl-5,6,7,8-tetrahydromethanopterin + coenzyme M + 2 Na(+)(in) = 5,6,7,8-tetrahydromethanopterin + methyl-coenzyme M + 2 Na(+)(out). Its pathway is one-carbon metabolism; methanogenesis from CO(2); methyl-coenzyme M from 5,10-methylene-5,6,7,8-tetrahydromethanopterin: step 2/2. Functionally, part of a complex that catalyzes the formation of methyl-coenzyme M and tetrahydromethanopterin from coenzyme M and methyl-tetrahydromethanopterin. This is an energy-conserving, sodium-ion translocating step. The protein is Tetrahydromethanopterin S-methyltransferase subunit G of Methanopyrus kandleri (strain AV19 / DSM 6324 / JCM 9639 / NBRC 100938).